A 139-amino-acid polypeptide reads, in one-letter code: Small ribosomal subunit protein uS12 (139 aa).

The protein belongs to the universal ribosomal protein uS12 family. As to quaternary structure, part of the 30S ribosomal subunit. Contacts proteins S8 and S17. May interact with IF1 in the 30S initiation complex.

In terms of biological role, with S4 and S5 plays an important role in translational accuracy. Interacts with and stabilizes bases of the 16S rRNA that are involved in tRNA selection in the A site and with the mRNA backbone. Located at the interface of the 30S and 50S subunits, it traverses the body of the 30S subunit contacting proteins on the other side and probably holding the rRNA structure together. The combined cluster of proteins S8, S12 and S17 appears to hold together the shoulder and platform of the 30S subunit. In Mycoplasma pneumoniae (strain ATCC 29342 / M129 / Subtype 1) (Mycoplasmoides pneumoniae), this protein is Small ribosomal subunit protein uS12.